Here is a 566-residue protein sequence, read N- to C-terminus: Proline--tRNA ligase (566 aa).

This sequence belongs to the class-II aminoacyl-tRNA synthetase family. ProS type 1 subfamily. As to quaternary structure, homodimer.

Its subcellular location is the cytoplasm. It carries out the reaction tRNA(Pro) + L-proline + ATP = L-prolyl-tRNA(Pro) + AMP + diphosphate. In terms of biological role, catalyzes the attachment of proline to tRNA(Pro) in a two-step reaction: proline is first activated by ATP to form Pro-AMP and then transferred to the acceptor end of tRNA(Pro). As ProRS can inadvertently accommodate and process non-cognate amino acids such as alanine and cysteine, to avoid such errors it has two additional distinct editing activities against alanine. One activity is designated as 'pretransfer' editing and involves the tRNA(Pro)-independent hydrolysis of activated Ala-AMP. The other activity is designated 'posttransfer' editing and involves deacylation of mischarged Ala-tRNA(Pro). The misacylated Cys-tRNA(Pro) is not edited by ProRS. The chain is Proline--tRNA ligase from Shouchella clausii (strain KSM-K16) (Alkalihalobacillus clausii).